We begin with the raw amino-acid sequence, 116 residues long: T cell receptor alpha variable 14/delta variable 4 (116 aa).

The first 21 residues, Met-1–Ala-21, serve as a signal peptide directing secretion. The 95-residue stretch at Gln-22–Glu-116 folds into the Ig-like domain. A disulfide bridge connects residues Cys-43 and Cys-112. Asn-78 carries N-linked (GlcNAc...) asparagine glycosylation.

As to quaternary structure, alpha-beta TR is a heterodimer composed of an alpha and beta chain; disulfide-linked. The alpha-beta TR is associated with the transmembrane signaling CD3 coreceptor proteins to form the TR-CD3 (TcR or TCR). The assembly of alpha-beta TR heterodimers with CD3 occurs in the endoplasmic reticulum where a single alpha-beta TR heterodimer associates with one CD3D-CD3E heterodimer, one CD3G-CD3E heterodimer and one CD247 homodimer forming a stable octameric structure. CD3D-CD3E and CD3G-CD3E heterodimers preferentially associate with TR alpha and TR beta chains, respectively. The association of the CD247 homodimer is the last step of TcR assembly in the endoplasmic reticulum and is required for transport to the cell surface.

It localises to the cell membrane. V region of the variable domain of T cell receptor (TR) alpha chain that participates in the antigen recognition. Alpha-beta T cell receptors are antigen specific receptors which are essential to the immune response and are present on the cell surface of T lymphocytes. Recognize peptide-major histocompatibility (MH) (pMH) complexes that are displayed by antigen presenting cells (APC), a prerequisite for efficient T cell adaptive immunity against pathogens. Binding of alpha-beta TR to pMH complex initiates TR-CD3 clustering on the cell surface and intracellular activation of LCK that phosphorylates the ITAM motifs of CD3G, CD3D, CD3E and CD247 enabling the recruitment of ZAP70. In turn ZAP70 phosphorylates LAT, which recruits numerous signaling molecules to form the LAT signalosome. The LAT signalosome propagates signal branching to three major signaling pathways, the calcium, the mitogen-activated protein kinase (MAPK) kinase and the nuclear factor NF-kappa-B (NF-kB) pathways, leading to the mobilization of transcription factors that are critical for gene expression and essential for T cell growth and differentiation. The T cell repertoire is generated in the thymus, by V-(D)-J rearrangement. This repertoire is then shaped by intrathymic selection events to generate a peripheral T cell pool of self-MH restricted, non-autoaggressive T cells. Post-thymic interaction of alpha-beta TR with the pMH complexes shapes TR structural and functional avidity. This Homo sapiens (Human) protein is T cell receptor alpha variable 14/delta variable 4.